The chain runs to 762 residues: Catalase-peroxidase (762 aa).

Residues 1–22 (MAEAKCPFSQSRSNANVAGGGT) form a disordered region. Positions 96 to 242 (WHSAGTYRVF…LAASHMGLIY (147 aa)) form a cross-link, tryptophyl-tyrosyl-methioninium (Trp-Tyr) (with M-268). Histidine 97 functions as the Proton acceptor in the catalytic mechanism. Residues 242-268 (YVNPEGPDGNPDPVAAARDIRTTFGRM) constitute a cross-link (tryptophyl-tyrosyl-methioninium (Tyr-Met) (with W-96)). Histidine 283 is a heme b binding site.

It belongs to the peroxidase family. Peroxidase/catalase subfamily. Homodimer or homotetramer. Heme b serves as cofactor. Post-translationally, formation of the three residue Trp-Tyr-Met cross-link is important for the catalase, but not the peroxidase activity of the enzyme.

The protein resides in the cytoplasm. The enzyme catalyses H2O2 + AH2 = A + 2 H2O. It carries out the reaction 2 H2O2 = O2 + 2 H2O. Functionally, bifunctional enzyme with both catalase and broad-spectrum peroxidase activity. The polypeptide is Catalase-peroxidase (Aspergillus niger (strain ATCC MYA-4892 / CBS 513.88 / FGSC A1513)).